The primary structure comprises 216 residues: Orotate phosphoribosyltransferase (216 aa).

Residues arginine 101, lysine 105, histidine 107, and 127–135 (EDLISTGGS) contribute to the 5-phospho-alpha-D-ribose 1-diphosphate site. Serine 131 contributes to the orotate binding site.

It belongs to the purine/pyrimidine phosphoribosyltransferase family. PyrE subfamily. As to quaternary structure, homodimer. The cofactor is Mg(2+).

The enzyme catalyses orotidine 5'-phosphate + diphosphate = orotate + 5-phospho-alpha-D-ribose 1-diphosphate. The protein operates within pyrimidine metabolism; UMP biosynthesis via de novo pathway; UMP from orotate: step 1/2. In terms of biological role, catalyzes the transfer of a ribosyl phosphate group from 5-phosphoribose 1-diphosphate to orotate, leading to the formation of orotidine monophosphate (OMP). In Cutibacterium acnes (strain DSM 16379 / KPA171202) (Propionibacterium acnes), this protein is Orotate phosphoribosyltransferase.